Reading from the N-terminus, the 124-residue chain is GCITTKELGTVMRSLGQNPTEAELQDMINEVDADGNGTIDFPEFLNLMARKIKDTDFEEELKEAFRVFDKDRNGFISAAELPHVMTNLGEKLTDEEVDEIIREADVDCDGQINYDEFVKVMMAK.

EF-hand domains follow at residues 1–18, 19–54, 56–91, and 92–124; these read GCITTKELGTVMRSLGQN, PTEAELQDMINEVDADGNGTIDFPEFLNLMARKIKD, DFEEELKEAFRVFDKDRNGFISAAELPHVMTNLGEK, and LTDEEVDEIIREADVDCDGQINYDEFVKVMMAK. Ca(2+) contacts are provided by cysteine 2, glutamate 7, aspartate 32, aspartate 34, asparagine 36, threonine 38, glutamate 43, aspartate 69, aspartate 71, asparagine 73, and glutamate 80. Residue lysine 91 is modified to N6,N6,N6-trimethyllysine. Ca(2+) is bound by residues aspartate 105, aspartate 107, aspartate 109, glutamine 111, and glutamate 116.

It belongs to the calmodulin family. As to expression, not detected in the organs tested.

Its function is as follows. Calmodulin mediates the control of a large number of enzymes, ion channels and other proteins by Ca(2+). Among the enzymes to be stimulated by the calmodulin-Ca(2+) complex are a number of protein kinases and phosphatases. The sequence is that of Putative calmodulin-3 (PCM3) from Solanum tuberosum (Potato).